A 425-amino-acid polypeptide reads, in one-letter code: Diacetylchitobiose binding protein DasA (425 aa).

Positions 1 to 20 are cleaved as a signal peptide; it reads MKRKLIAAIGIAGMMVSIAA. A lipid anchor (N-palmitoyl cysteine) is attached at cysteine 21. Cysteine 21 carries the S-diacylglycerol cysteine lipid modification.

It belongs to the bacterial solute-binding protein 1 family. As to quaternary structure, the complex is composed of two ATP-binding proteins (MsiK), two transmembrane proteins (DasB and DasC) and a solute-binding protein (DasA).

Its subcellular location is the cell membrane. Functionally, part of the ABC transporter complex DasABC-MsiK involved in N,N'-diacetylchitobiose ((GlcNAc)2) uptake. Binds specifically to (GlcNAc)2. Can also bind to GlcNAc, (GlcNAc)3, (GlcNAc)4 and (GlcNAc)5, but it exhibits the highest affinity for (GlcNAc)2. Involved in the control of morphological differentiation. The sequence is that of Diacetylchitobiose binding protein DasA from Streptomyces coelicolor (strain ATCC BAA-471 / A3(2) / M145).